The primary structure comprises 459 residues: uncharacterized protein (459 aa).

A TRAM domain is found at 7–65 (PVNKNEIYTLTFEDLTHEGNGVAKIEGYPLFVPEVLPDEQAKVKVVKVNKNFGFGKLLE). [4Fe-4S] cluster contacts are provided by C78, C82, C85, and C164. 4 residues coordinate S-adenosyl-L-methionine: Q288, Y317, E338, and D386. C413 acts as the Nucleophile in catalysis.

It belongs to the class I-like SAM-binding methyltransferase superfamily. RNA M5U methyltransferase family.

This is an uncharacterized protein from Oceanobacillus iheyensis (strain DSM 14371 / CIP 107618 / JCM 11309 / KCTC 3954 / HTE831).